A 65-amino-acid polypeptide reads, in one-letter code: MKIAEIKEMTTNDLVERVEAETANYNQMVINHSISPLENPAQIKQLRRTIARMKTELRQRELNNK.

The protein belongs to the universal ribosomal protein uL29 family.

This chain is Large ribosomal subunit protein uL29, found in Bacteroides thetaiotaomicron (strain ATCC 29148 / DSM 2079 / JCM 5827 / CCUG 10774 / NCTC 10582 / VPI-5482 / E50).